The sequence spans 347 residues: NADH-ubiquinone oxidoreductase chain 2 (347 aa).

A run of 10 helical transmembrane segments spans residues 1–21, 25–45, 59–79, 111–131, 149–169, 178–198, 201–221, 237–257, 276–296, and 326–346; these read MNPL…AIVA, HWLM…PILM, YFLT…MNLV, FHFW…LILL, INLD…GWGG, IMAY…AYNP, TLLN…MFML, MPLL…LPPL, VILP…YMRL, and LSPL…LALL.

Belongs to the complex I subunit 2 family. Core subunit of respiratory chain NADH dehydrogenase (Complex I) which is composed of 45 different subunits. Interacts with TMEM242.

It is found in the mitochondrion inner membrane. It catalyses the reaction a ubiquinone + NADH + 5 H(+)(in) = a ubiquinol + NAD(+) + 4 H(+)(out). Functionally, core subunit of the mitochondrial membrane respiratory chain NADH dehydrogenase (Complex I) which catalyzes electron transfer from NADH through the respiratory chain, using ubiquinone as an electron acceptor. Essential for the catalytic activity and assembly of complex I. This is NADH-ubiquinone oxidoreductase chain 2 from Pteropus pumilus (Little golden-mantled flying fox).